We begin with the raw amino-acid sequence, 278 residues long: Autotransporter adhesin BtaF (278 aa).

The signal sequence occupies residues 1-29; it reads MKLPPVFVFELVENQGLANIALIRPRVIA. Positions 30–182 are surface exposed passenger domain; that stretch reads PDNNLRPGGI…RAAIRQNSAA (153 aa). The interval 186–224 is outer membrane translocation of the passenger domain; it reads LGQRVDGLQGQINSARKEARAGAANAAALSGLRYDNRPG. The tract at residues 225–278 is translocator domain; it reads KVSIATGVGGFKGSTALAAGIGYTSKNENARYNVSVAYNEAGTSWNAGASFTLN.

It belongs to the autotransporter-2 (AT-2) (TC 1.B.40) family. In terms of assembly, homotrimer.

The protein localises to the cell surface. Its subcellular location is the cell outer membrane. In terms of biological role, participates in bacterial attachment to several surfaces, including various extracellular matrix (ECM) components and a hydrophobic abiotic surface. Involved in adhesion to host epithelial cells and is required for full virulence in mice. Also implicated in the resistance to porcine serum. In Brucella suis biovar 1 (strain 1330), this protein is Autotransporter adhesin BtaF.